Consider the following 172-residue polypeptide: Large ribosomal subunit protein uL10 (172 aa).

It belongs to the universal ribosomal protein uL10 family. As to quaternary structure, part of the ribosomal stalk of the 50S ribosomal subunit. The N-terminus interacts with L11 and the large rRNA to form the base of the stalk. The C-terminus forms an elongated spine to which L12 dimers bind in a sequential fashion forming a multimeric L10(L12)X complex.

In terms of biological role, forms part of the ribosomal stalk, playing a central role in the interaction of the ribosome with GTP-bound translation factors. The protein is Large ribosomal subunit protein uL10 of Chelativorans sp. (strain BNC1).